We begin with the raw amino-acid sequence, 159 residues long: MQCPTCQNTDSRVLESRSADTGKSVRRRRECLNCSFRFTTYERVETMPISVIKKDGSRELFNKDKLVTGISRACEKTTFSRESIINFVDSIESQIVQDSNKDIKSSQIGELILKGLRKENEVAYIRYASVYRKFNGVKDFVSTLESLKGSSKNELASIL.

A zinc finger lies at cysteine 3 to cysteine 34. Residues isoleucine 49–aspartate 139 form the ATP-cone domain.

This sequence belongs to the NrdR family. Zn(2+) is required as a cofactor.

Functionally, negatively regulates transcription of bacterial ribonucleotide reductase nrd genes and operons by binding to NrdR-boxes. In Prochlorococcus marinus subsp. pastoris (strain CCMP1986 / NIES-2087 / MED4), this protein is Transcriptional repressor NrdR.